Consider the following 142-residue polypeptide: Hemoglobin subunit alpha (142 aa).

Residues 2–142 form the Globin domain; the sequence is VLSPADKSNV…VSTVLTSKYR (141 aa). A Phosphoserine modification is found at Ser-4. N6-succinyllysine is present on residues Lys-8 and Lys-12. Lys-17 is subject to N6-acetyllysine; alternate. Lys-17 carries the post-translational modification N6-succinyllysine; alternate. A Phosphotyrosine modification is found at Tyr-25. Ser-36 is modified (phosphoserine). At Lys-41 the chain carries N6-succinyllysine. Ser-50 carries the post-translational modification Phosphoserine. Residue His-59 coordinates O2. Residue His-88 participates in heme b binding. Residue Ser-103 is modified to Phosphoserine. Thr-109 carries the post-translational modification Phosphothreonine. Residues Ser-125 and Ser-132 each carry the phosphoserine modification. Phosphothreonine is present on residues Thr-135 and Thr-138. Position 139 is a phosphoserine (Ser-139).

The protein belongs to the globin family. Heterotetramer of two alpha chains and two beta chains. In terms of tissue distribution, red blood cells.

Involved in oxygen transport from the lung to the various peripheral tissues. Functionally, hemopressin acts as an antagonist peptide of the cannabinoid receptor CNR1. Hemopressin-binding efficiently blocks cannabinoid receptor CNR1 and subsequent signaling. The polypeptide is Hemoglobin subunit alpha (HBA) (Chlorocebus aethiops (Green monkey)).